Reading from the N-terminus, the 249-residue chain is Probable transcriptional regulatory protein Rru_A1086 (249 aa).

It belongs to the TACO1 family.

It localises to the cytoplasm. The polypeptide is Probable transcriptional regulatory protein Rru_A1086 (Rhodospirillum rubrum (strain ATCC 11170 / ATH 1.1.1 / DSM 467 / LMG 4362 / NCIMB 8255 / S1)).